A 437-amino-acid chain; its full sequence is Probable glycine dehydrogenase (decarboxylating) subunit 1 (437 aa).

The protein belongs to the GcvP family. N-terminal subunit subfamily. In terms of assembly, the glycine cleavage system is composed of four proteins: P, T, L and H. In this organism, the P 'protein' is a heterodimer of two subunits.

The catalysed reaction is N(6)-[(R)-lipoyl]-L-lysyl-[glycine-cleavage complex H protein] + glycine + H(+) = N(6)-[(R)-S(8)-aminomethyldihydrolipoyl]-L-lysyl-[glycine-cleavage complex H protein] + CO2. In terms of biological role, the glycine cleavage system catalyzes the degradation of glycine. The P protein binds the alpha-amino group of glycine through its pyridoxal phosphate cofactor; CO(2) is released and the remaining methylamine moiety is then transferred to the lipoamide cofactor of the H protein. The sequence is that of Probable glycine dehydrogenase (decarboxylating) subunit 1 from Thermotoga maritima (strain ATCC 43589 / DSM 3109 / JCM 10099 / NBRC 100826 / MSB8).